The following is a 147-amino-acid chain: Endoribonuclease YbeY (147 aa).

Zn(2+) is bound by residues His-109, His-113, and His-119.

It belongs to the endoribonuclease YbeY family. The cofactor is Zn(2+).

Its subcellular location is the cytoplasm. Its function is as follows. Single strand-specific metallo-endoribonuclease involved in late-stage 70S ribosome quality control and in maturation of the 3' terminus of the 16S rRNA. This chain is Endoribonuclease YbeY, found in Thiobacillus denitrificans (strain ATCC 25259 / T1).